A 191-amino-acid chain; its full sequence is Cytochrome b-245 light chain (191 aa).

The Cytoplasmic portion of the chain corresponds to 2–7 (GQIEWA). The chain crosses the membrane as a helical span at residues 8 to 30 (MWANEQALASGLILITGGIVATA). Residues 31-35 (GQFTQ) lie on the Extracellular side of the membrane. Residues 36 to 53 (WYLGAYSIAAGVLVCLLE) form a helical membrane-spanning segment. Residues 54–69 (YPRGKRSKGSTMERCG) lie on the Cytoplasmic side of the membrane. The stretch at 70–80 (QKYLTRVVKLF) is an intramembrane region. Topologically, residues 81–86 (GPLTRN) are cytoplasmic. Residues 87–104 (YYIRAFLHLGLAVPAGFL) traverse the membrane as a helical segment. Leucine 105 is a topological domain (extracellular). Residues 106 to 126 (ATILGTACLAIASGIYLLAAI) traverse the membrane as a helical segment. Residues 127–191 (RGEQWSPIEP…NPMPVNDEVV (65 aa)) lie on the Cytoplasmic side of the membrane. Residues 134-191 (IEPKPKERPQIGGTIKQPPSNPPPRPPAEARKKPSEEAAGVPTGGPQENPMPVNDEVV) form a disordered region. At threonine 147 the chain carries Phosphothreonine. Lysine 149 is covalently cross-linked (Glycyl lysine isopeptide (Lys-Gly) (interchain with G-Cter in ubiquitin)). Serine 168 carries the post-translational modification Phosphoserine.

Belongs to the p22phox family. Component of the phagocyte NADPH oxidase core complex/cytochrome b558 complex, composed of CYBB (heavy chain (beta)) and CYBA (light chain (alpha)). Component of the phagocyte NADPH oxidase complex composed of an obligatory core heterodimer formed by the membrane proteins CYBA and CYBB and the cytosolic regulatory subunits NCF1/p47-phox, NCF2/p67-phox, NCF4/p40-phox and the small GTPase RAC1 or RAC2. Interacts with NCF1 (via SH3 domain). Interacts with SH3PXD2A. Interacts with DUOX1, DUOX2 and TPO. Interacts with NOX4; this interaction mediates superoxide generation. Interacts with calprotectin (S100A8/9). Interacts with GBP7. Interacts with NOXO1. Forms a heterodimer with NOX3 and is essential for activity and cell membrane localization of NOX3. Interacts with NOX1. Post-translationally, phosphorylation at Thr-147 enhances NADPH oxidase activity by promoting NCF1/p47-phox binding. Ubiquitinated at Lys-149 likely by RNF145.

Its subcellular location is the cell membrane. Functionally, subunit of NADPH oxidase complexes that is required for the NADPH oxidase activity that generates, in various cell types, superoxide from molecular oxygen utilizing NADPH as an electron donor. Subunit of the phagocyte NADPH oxidase complex that mediates the transfer of electrons from cytosolic NADPH to O2 to produce the superoxide anion (O2(-)). In the activated complex, electrons are first transferred from NADPH to flavin adenine dinucleotide (FAD) and subsequently transferred via two heme molecules to molecular oxygen, producing superoxide through an outer-sphere reaction. Activation of the NADPH oxidase complex is initiated by the assembly of cytosolic subunits of the NADPH oxidase complex with the core NADPH oxidase complex to form a complex at the plasma membrane or phagosomal membrane. This activation process is initiated by phosphorylation dependent binding of the cytosolic NCF1/p47-phox subunit to the C-terminus of CYBA/p22-phox. Aassociates with NOX3 to form a functional NADPH oxidase constitutively generating superoxide. The protein is Cytochrome b-245 light chain of Bos taurus (Bovine).